We begin with the raw amino-acid sequence, 1374 residues long: DNA-directed RNA polymerase subunit beta (1374 aa).

The protein belongs to the RNA polymerase beta chain family. In terms of assembly, the RNAP catalytic core consists of 2 alpha, 1 beta, 1 beta' and 1 omega subunit. When a sigma factor is associated with the core the holoenzyme is formed, which can initiate transcription.

The enzyme catalyses RNA(n) + a ribonucleoside 5'-triphosphate = RNA(n+1) + diphosphate. Its function is as follows. DNA-dependent RNA polymerase catalyzes the transcription of DNA into RNA using the four ribonucleoside triphosphates as substrates. The sequence is that of DNA-directed RNA polymerase subunit beta from Rickettsia prowazekii (strain Madrid E).